Here is a 343-residue protein sequence, read N- to C-terminus: F17b-G fimbrial adhesin (343 aa).

The first 22 residues, 1–22, serve as a signal peptide directing secretion; it reads MTNFYKVFLAVFILVCCNISHA. A receptor-binding lectin domain region spans residues 23–199; sequence VVSFIGSTEN…LNPFTLNDTV (177 aa). Residues 65 to 66, 110 to 111, and 138 to 141 contribute to the a carbohydrate site; these read AN, DT, and STQG. A disulfide bridge links cysteine 75 with cysteine 132. Positions 200–343 are fimbrillin-binding domain; sequence TSCRLLTPSA…GISTFTFSYQ (144 aa). Residues 287 to 307 form a disordered region; it reads LKFGPDSPVKGNENQWQLSTG. Positions 298 to 307 are enriched in polar residues; it reads NENQWQLSTG.

This sequence belongs to the fimbrial protein family.

It localises to the fimbrium. In terms of biological role, essential fimbrial adhesion factor that mediates binding to N-acetylglucosamine-containing receptors in the host intestinal microvilli, leading to colonization of the intestinal tissue, and diarrhea or septicemia. Also confers adhesiveness to laminin and basement membranes. The polypeptide is F17b-G fimbrial adhesin (f17bG) (Escherichia coli).